Reading from the N-terminus, the 308-residue chain is GTP cyclohydrolase MptA (308 aa).

A disordered region spans residues 282–308 (NDESIHQHNAHAEREVTLGQLRDELDA).

Belongs to the GTP cyclohydrolase IV family. In terms of assembly, homodimer. Fe(2+) serves as cofactor.

The enzyme catalyses GTP + H2O = 7,8-dihydroneopterin 2',3'-cyclic phosphate + formate + diphosphate + H(+). It functions in the pathway cofactor biosynthesis; 5,6,7,8-tetrahydromethanopterin biosynthesis. Converts GTP to 7,8-dihydro-D-neopterin 2',3'-cyclic phosphate, the first intermediate in the biosynthesis of coenzyme methanopterin. Involved in archaeosine (G(+)) and folate biosynthesis. The protein is GTP cyclohydrolase MptA of Haloferax volcanii (strain ATCC 29605 / DSM 3757 / JCM 8879 / NBRC 14742 / NCIMB 2012 / VKM B-1768 / DS2) (Halobacterium volcanii).